A 111-amino-acid chain; its full sequence is UPF0060 membrane protein Cbei_2176 (111 aa).

The next 4 membrane-spanning stretches (helical) occupy residues isoleucine 7–tryptophan 27, serine 33–leucine 53, phenylalanine 60–tryptophan 80, and isoleucine 85–isoleucine 105.

The protein belongs to the UPF0060 family.

Its subcellular location is the cell membrane. In Clostridium beijerinckii (strain ATCC 51743 / NCIMB 8052) (Clostridium acetobutylicum), this protein is UPF0060 membrane protein Cbei_2176.